We begin with the raw amino-acid sequence, 2219 residues long: E3 ubiquitin-protein ligase Ubr3 (2219 aa).

2 disordered regions span residues 1 to 48 (MDED…DLSS) and 78 to 134 (AAGA…SALS). The span at 20–29 (VREQTHHPPM) shows a compositional bias: basic and acidic residues. Positions 31–42 (EDQELDNEDGSS) are enriched in acidic residues. Residues 114–134 (GPTTTTSSGTAAESGAASALS) show a composition bias toward low complexity. The segment at 222–293 (AKCGLVWVPH…AEGFCSDHGI (72 aa)) adopts a UBR-type zinc-finger fold. Disordered stretches follow at residues 1348-1367 (SFSLSDGEDQSSDDDSTMDV) and 1440-1464 (QREKQAEAKAREAKEKEERRKKARE). A compositionally biased stretch (acidic residues) spans 1353–1367 (DGEDQSSDDDSTMDV). The RING-type; degenerate zinc-finger motif lies at 1607–1643 (CGHHVHLSCLEAYLKTLYTTQRQPVQDRGEFYCPVCR). Disordered regions lie at residues 1872 to 1902 (VGSDNSAAESQQQESAAGTTNNRRRAGQQQQ) and 1935 to 1954 (SAAASAAGSSSTTSTNHGAS). Low complexity predominate over residues 1877-1888 (SAAESQQQESAA).

The protein belongs to the E3 ubiquitin-protein ligase UBR1-like family. In terms of assembly, selectively interacts (via UBR-type zinc finger) with the cleaved form of Diap1; this interaction is enhanced by tal. Interacts with tal and Rrp1. Interacts with ovo isoform B (via N-terminus). Interacts with Cad99C (via the cytoplasmic domain). Interacts with ck and Sans. Interacts with cos (via Kinesin motor domain). In terms of processing, in vitro, self-ubiquitination in the presence of E1, E2 and ubiquitin.

Its subcellular location is the cytoplasm. The protein localises to the nucleus. It carries out the reaction S-ubiquitinyl-[E2 ubiquitin-conjugating enzyme]-L-cysteine + [acceptor protein]-L-lysine = [E2 ubiquitin-conjugating enzyme]-L-cysteine + N(6)-ubiquitinyl-[acceptor protein]-L-lysine.. It participates in protein modification; protein ubiquitination. Functionally, E3 ubiquitin-protein ligase which is a component of the N-end rule pathway. Recognizes and binds to proteins bearing specific N-terminal residues, leading to their ubiquitination and subsequent degradation. Binds to the E3 ubiquitin-protein ligase Diap1 and enhances its ubiquitination and anti-apoptotic functions. Essential during trichome development for the ubiquitination of the N-terminus of ovo isoform B (svb), converting it from a transcriptional inhibitor to an activator. Positively regulates a hh-signaling pathway which functions in photoreceptor differentiation. Activation of hh up-regulates transcription of Ubr3, which in turn promotes hh signaling by mediating the ubiquitination and degradation of cos. Necessary for auditory transduction: plays a role in Johnston's organ organization by acting in the regulation of zip and ck function in scolopidial apical attachment. Likely to function by acting in a pathway that negatively regulates the ubiquitination of zip, consequently affecting its interaction with ck. May also negatively regulate a component of the SCF (SKP1-CUL1-F-box protein) E3 ubiquitin-protein ligase complex Cul1, which also appears to function in the negative regulation of the zip-ck interaction and scolopidial apical attachment. The chain is E3 ubiquitin-protein ligase Ubr3 from Drosophila melanogaster (Fruit fly).